An 80-amino-acid chain; its full sequence is MSLRKQTPSDFLKQIIGRPVVVKLNSGVDYRGVLACLDGYMNIALEQTEEYVNGQLKNKYGDAFIRGNNVLYISTQKRRM.

A Sm domain is found at 7–79; that stretch reads TPSDFLKQII…VLYISTQKRR (73 aa). Residue Lys-59 is modified to N6-acetyllysine.

Belongs to the snRNP Sm proteins family. SmF/LSm6 subfamily. As to quaternary structure, component of the precatalytic spliceosome (spliceosome B complex). Component of the U4/U6-U5 tri-snRNP complex, a building block of the precatalytic spliceosome (spliceosome B complex). The U4/U6-U5 tri-snRNP complex is composed of the U4, U6 and U5 snRNAs and at least PRPF3, PRPF4, PRPF6, PRPF8, PRPF31, SNRNP200, TXNL4A, SNRNP40, SNRPB, SNRPD1, SNRPD2, SNRPD3, SNRPE, SNRPF, SNRPG, DDX23, CD2BP2, PPIH, SNU13, EFTUD2, SART1 and USP39, plus LSM2, LSM3, LSM4, LSM5, LSM6, LSM7 and LSM8. LSM2, LSM3, LSM4, LSM5, LSM6, LSM7 and LSM8 form a heptameric, ring-shaped subcomplex (the LSM2-8 complex) that is part of the U4/U6-U5 tri-snRNP complex and the precatalytic spliceosome. Component of the heptameric LSM1-LSM7 complex, which consists of LSM1, LSM2, LSM3, LSM4, LSM5, LSM6 and LSM7.

Its subcellular location is the cytoplasm. The protein resides in the nucleus. In terms of biological role, plays a role in pre-mRNA splicing as component of the U4/U6-U5 tri-snRNP complex that is involved in spliceosome assembly, and as component of the precatalytic spliceosome (spliceosome B complex). The heptameric LSM2-8 complex binds specifically to the 3'-terminal U-tract of U6 snRNA. Component of LSm protein complexes, which are involved in RNA processing and may function in a chaperone-like manner, facilitating the efficient association of RNA processing factors with their substrates. Component of the cytoplasmic LSM1-LSM7 complex, which is thought to be involved in mRNA degradation by activating the decapping step in the 5'-to-3' mRNA decay pathway. The chain is U6 snRNA-associated Sm-like protein LSm6 (LSM6) from Homo sapiens (Human).